Here is a 60-residue protein sequence, read N- to C-terminus: Potassium channel toxin alpha-KTx 15.9 (60 aa).

The signal sequence occupies residues 1–22 (MKIFLPVLVMLILCSMCLLTEG). Cystine bridges form between Cys-30/Cys-51, Cys-36/Cys-56, and Cys-40/Cys-58.

Belongs to the short scorpion toxin superfamily. Potassium channel inhibitor family. Alpha-KTx 15 subfamily. As to expression, expressed by the venom gland.

The protein localises to the secreted. In terms of biological role, blocker of A-type voltage-gated potassium channels of cerebellar granular cells. May also inhibit Kv4/KCND when coexpressed with DPP6 or DPP10. The occlusion of the outer entry of the K(+) conducting pore is partially reversible and affects both open and closed channels. It shares the same target in rat brain than BmTX3 (AC Q8I0L5) and AmmTX3 (AC P60208). Has been shown to weakly inhibit TRPV1 channels. The sequence is that of Potassium channel toxin alpha-KTx 15.9 from Lychas mucronatus (Chinese swimming scorpion).